Reading from the N-terminus, the 332-residue chain is UDP-N-acetylenolpyruvoylglucosamine reductase (332 aa).

Residues 45–243 (RAGGHAAYFY…LGTRIKTQPL (199 aa)) form the FAD-binding PCMH-type domain. Arginine 194 is a catalytic residue. The active-site Proton donor is serine 250. Residue glutamate 320 is part of the active site.

This sequence belongs to the MurB family. Requires FAD as cofactor.

It is found in the cytoplasm. The catalysed reaction is UDP-N-acetyl-alpha-D-muramate + NADP(+) = UDP-N-acetyl-3-O-(1-carboxyvinyl)-alpha-D-glucosamine + NADPH + H(+). Its pathway is cell wall biogenesis; peptidoglycan biosynthesis. Cell wall formation. In Nitrosomonas eutropha (strain DSM 101675 / C91 / Nm57), this protein is UDP-N-acetylenolpyruvoylglucosamine reductase.